A 124-amino-acid chain; its full sequence is Large ribosomal subunit protein bL12 (124 aa).

The protein belongs to the bacterial ribosomal protein bL12 family. In terms of assembly, homodimer. Part of the ribosomal stalk of the 50S ribosomal subunit. Forms a multimeric L10(L12)X complex, where L10 forms an elongated spine to which 2 to 4 L12 dimers bind in a sequential fashion. Binds GTP-bound translation factors.

Forms part of the ribosomal stalk which helps the ribosome interact with GTP-bound translation factors. Is thus essential for accurate translation. The protein is Large ribosomal subunit protein bL12 of Cupriavidus metallidurans (strain ATCC 43123 / DSM 2839 / NBRC 102507 / CH34) (Ralstonia metallidurans).